Reading from the N-terminus, the 144-residue chain is Angiogenin-4 (144 aa).

The N-terminal stretch at 1–24 (MTMSPCPLLLVFVLGLVVIPPTLA) is a signal peptide. Histidine 36 (proton acceptor) is an active-site residue. 3 disulfides stabilise this stretch: cysteine 49–cysteine 103, cysteine 62–cysteine 114, and cysteine 80–cysteine 129. The Nucleolar localization signal signature appears at 54-58 (KERKL). Histidine 136 serves as the catalytic Proton donor.

This sequence belongs to the pancreatic ribonuclease family. As to expression, detected in small intestine, caecum and colon, with the highest expression in Paneth cells in the intestinal epithelium.

The protein localises to the secreted. Its subcellular location is the cytoplasmic vesicle. It localises to the secretory vesicle lumen. The protein resides in the nucleus. It is found in the nucleolus. Functionally, has bactericidal activity against E.faecalis and L.monocytogenes, but not against L.innocua and E.coli. Promotes angiogenesis (in vitro). Has low ribonuclease activity (in vitro). Promotes proliferation of melanoma cells, but not of endothelial cells or fibroblasts (in vitro). The sequence is that of Angiogenin-4 (Ang4) from Mus musculus (Mouse).